Here is a 106-residue protein sequence, read N- to C-terminus: MAWRLWSTTLKVSLTSTLKSLNSASMFANLRSTMTLHSSNSFRVTYYVFGFFTFRWQRSLIITSKVPSGNGIQFDFNSRTSHWLLNFLYSLSEYHLLFKVKTPFLT.

This is an uncharacterized protein from Mycoplasma pneumoniae (strain ATCC 29342 / M129 / Subtype 1) (Mycoplasmoides pneumoniae).